The following is a 51-amino-acid chain: Defensin-like protein 2A (51 aa).

A Pyrrolidone carboxylic acid modification is found at glutamine 1. Cystine bridges form between cysteine 4/cysteine 51, cysteine 15/cysteine 36, cysteine 21/cysteine 45, and cysteine 25/cysteine 47. Phosphoserine; by CPK is present on serine 8.

In terms of assembly, forms oligomers in its native state.

Functionally, possesses antifungal activity sensitive to inorganic cations. The chain is Defensin-like protein 2A from Sinapis alba (White mustard).